The chain runs to 615 residues: 1-deoxy-D-xylulose-5-phosphate synthase (615 aa).

Thiamine diphosphate contacts are provided by residues His72 and 111–113 (GHS). Residue Asp142 participates in Mg(2+) binding. Residues 143-144 (GA), Asn171, Tyr278, and Glu360 each bind thiamine diphosphate. Asn171 is a binding site for Mg(2+).

Belongs to the transketolase family. DXPS subfamily. Homodimer. It depends on Mg(2+) as a cofactor. Requires thiamine diphosphate as cofactor.

It carries out the reaction D-glyceraldehyde 3-phosphate + pyruvate + H(+) = 1-deoxy-D-xylulose 5-phosphate + CO2. It functions in the pathway metabolic intermediate biosynthesis; 1-deoxy-D-xylulose 5-phosphate biosynthesis; 1-deoxy-D-xylulose 5-phosphate from D-glyceraldehyde 3-phosphate and pyruvate: step 1/1. Its function is as follows. Catalyzes the acyloin condensation reaction between C atoms 2 and 3 of pyruvate and glyceraldehyde 3-phosphate to yield 1-deoxy-D-xylulose-5-phosphate (DXP). This chain is 1-deoxy-D-xylulose-5-phosphate synthase, found in Campylobacter jejuni subsp. jejuni serotype O:2 (strain ATCC 700819 / NCTC 11168).